Here is a 419-residue protein sequence, read N- to C-terminus: DNA polymerase IV (419 aa).

One can recognise a UmuC domain in the interval 12 to 193 (IFHIDMNCFY…MSVEEMYGIG (182 aa)). Mg(2+) contacts are provided by Asp16 and Asp112. The active site involves Glu113. Residues 388–419 (IITSQKNKNESQENQQPRTSFQKDFLDDYKKP) form a disordered region.

The protein belongs to the DNA polymerase type-Y family. In terms of assembly, monomer. The cofactor is Mg(2+).

It is found in the cytoplasm. It carries out the reaction DNA(n) + a 2'-deoxyribonucleoside 5'-triphosphate = DNA(n+1) + diphosphate. Poorly processive, error-prone DNA polymerase involved in untargeted mutagenesis. Copies undamaged DNA at stalled replication forks, which arise in vivo from mismatched or misaligned primer ends. These misaligned primers can be extended by PolIV. Exhibits no 3'-5' exonuclease (proofreading) activity. May be involved in translesional synthesis, in conjunction with the beta clamp from PolIII. In Oceanobacillus iheyensis (strain DSM 14371 / CIP 107618 / JCM 11309 / KCTC 3954 / HTE831), this protein is DNA polymerase IV.